Reading from the N-terminus, the 262-residue chain is Protein NEGATIVE GRAVITROPIC RESPONSE OF ROOTS (262 aa).

Residues 1–40 (MKFFNWMQNKLGGKQENRKSNTSTSTTYAKPEPREEFSDW) form a disordered region. Residues 43 to 49 (SLLAIGT) carry the IGT motif motif.

It belongs to the LAZY family.

Its function is as follows. Involved in the control of root gravitropism. The sequence is that of Protein NEGATIVE GRAVITROPIC RESPONSE OF ROOTS from Medicago truncatula (Barrel medic).